Here is a 255-residue protein sequence, read N- to C-terminus: Leucyl/phenylalanyl-tRNA--protein transferase (255 aa).

It belongs to the L/F-transferase family.

It is found in the cytoplasm. It carries out the reaction N-terminal L-lysyl-[protein] + L-leucyl-tRNA(Leu) = N-terminal L-leucyl-L-lysyl-[protein] + tRNA(Leu) + H(+). The catalysed reaction is N-terminal L-arginyl-[protein] + L-leucyl-tRNA(Leu) = N-terminal L-leucyl-L-arginyl-[protein] + tRNA(Leu) + H(+). It catalyses the reaction L-phenylalanyl-tRNA(Phe) + an N-terminal L-alpha-aminoacyl-[protein] = an N-terminal L-phenylalanyl-L-alpha-aminoacyl-[protein] + tRNA(Phe). In terms of biological role, functions in the N-end rule pathway of protein degradation where it conjugates Leu, Phe and, less efficiently, Met from aminoacyl-tRNAs to the N-termini of proteins containing an N-terminal arginine or lysine. In Burkholderia thailandensis (strain ATCC 700388 / DSM 13276 / CCUG 48851 / CIP 106301 / E264), this protein is Leucyl/phenylalanyl-tRNA--protein transferase.